The following is a 99-amino-acid chain: DNA-binding protein HmvA (99 aa).

The interaction with DNA stretch occupies residues 52-55 (KTIK).

It belongs to the archaeal histone HMF family. In terms of assembly, homodimer or heterodimer with another histone. Dimers then assemble into higher oligomers, with the DNA wrapped around the protein core.

It is found in the cytoplasm. Its subcellular location is the chromosome. In terms of biological role, binds and compact DNA (95 to 150 base pairs) to form nucleosome-like structures that contain positive DNA supercoils. Increases the resistance of DNA to thermal denaturation (in vitro). This is DNA-binding protein HmvA (hmvA) from Methanococcus voltae.